Here is a 725-residue protein sequence, read N- to C-terminus: Catalase B (725 aa).

The N-terminal stretch at 1–15 (MRALSLASLIGIASA) is a signal peptide. Residues 16 to 27 (ACPYMTGELERR) constitute a propeptide that is removed on maturation. N-linked (GlcNAc...) asparagine glycosylation is present at N50. Residue H101 is part of the active site. N-linked (GlcNAc...) asparagine glycosylation is present at N119. The active site involves N174. Heme is bound at residue Y388. N-linked (GlcNAc...) asparagine glycans are attached at residues N447, N550, and N645.

This sequence belongs to the catalase family. In terms of assembly, homotetramer. Heme serves as cofactor.

The protein localises to the secreted. It carries out the reaction 2 H2O2 = O2 + 2 H2O. Functionally, occurs in almost all aerobically respiring organisms and serves to protect cells from the toxic effects of hydrogen peroxide through its degradation into water and oxygen. In Aspergillus oryzae (strain ATCC 42149 / RIB 40) (Yellow koji mold), this protein is Catalase B (catB).